The chain runs to 430 residues: Histidinol dehydrogenase (430 aa).

Substrate is bound by residues Ser-237, Gln-259, and His-262. Positions 259 and 262 each coordinate Zn(2+). Residues Glu-327 and His-328 each act as proton acceptor in the active site. Residues His-328, Asp-361, Glu-415, and His-420 each contribute to the substrate site. Asp-361 contributes to the Zn(2+) binding site. His-420 contacts Zn(2+).

Belongs to the histidinol dehydrogenase family. The cofactor is Zn(2+).

The catalysed reaction is L-histidinol + 2 NAD(+) + H2O = L-histidine + 2 NADH + 3 H(+). Its pathway is amino-acid biosynthesis; L-histidine biosynthesis; L-histidine from 5-phospho-alpha-D-ribose 1-diphosphate: step 9/9. Functionally, catalyzes the sequential NAD-dependent oxidations of L-histidinol to L-histidinaldehyde and then to L-histidine. The polypeptide is Histidinol dehydrogenase (Mesorhizobium japonicum (strain LMG 29417 / CECT 9101 / MAFF 303099) (Mesorhizobium loti (strain MAFF 303099))).